Reading from the N-terminus, the 429-residue chain is MQKLVAIKGMNDILPPDSARWEWLEDKVRTLMARYAYRNIRTPIVEPTPLFVRGLGEVTDIVEKEMYSFEDRLNGEQLTLRPEATAGVVRAVVEHSMLYDGGKRLYYMGPMFRHERPQRGRYRQFHQIGAEALGFPGAEADAEIILLAHALWAELGLENVRLELNSLGQPDERRAHRAALIAYLEQHMDVLDEDARRRLHSNPLRILDTKNPAMQALVEGAPRLIDFLGEASLQHFETVKAILDANGVAWSLNPRLVRGMDYYNLTVFEFVTDQLGSQGTICGGGRYDYLIEQIGGKFAPAVGWALGVERVLELLKEQETQVARPAADAYAVVPDASALPVVMAALQRLRAQGVSVQMHSPTAAGEGMGSMKSQFKKADASGARYALVFGADELARGAVTVKPLRDSGEQAERPLAALAEWAATLQSSR.

It belongs to the class-II aminoacyl-tRNA synthetase family. In terms of assembly, homodimer.

It is found in the cytoplasm. It catalyses the reaction tRNA(His) + L-histidine + ATP = L-histidyl-tRNA(His) + AMP + diphosphate + H(+). This Acidovorax ebreus (strain TPSY) (Diaphorobacter sp. (strain TPSY)) protein is Histidine--tRNA ligase.